The sequence spans 148 residues: uncharacterized protein (148 aa).

Positions 1-17 are enriched in polar residues; it reads MEGLQRSTISFRRQGSS. Residues 1–148 form a disordered region; sequence MEGLQRSTIS…SRRRIVTKKR (148 aa). Basic and acidic residues-rich tracts occupy residues 36–47 and 58–67; these read EQKDESQRDEQP and KPIDEKDKLR. Phosphoserine occurs at positions 100 and 107. The segment covering 128 to 148 has biased composition (basic residues); that stretch reads VNPRKRPPKRRSRRRIVTKKR.

This is an uncharacterized protein from Arabidopsis thaliana (Mouse-ear cress).